The chain runs to 748 residues: Polyribonucleotide nucleotidyltransferase (748 aa).

Residues Asp-487 and Asp-493 each contribute to the Mg(2+) site. One can recognise a KH domain in the interval 554–613 (PSTTTIKIDKDKIRDIIGPSGKVIKEICETSGAKIDISDDGTVSVYASDRDKLKVALDKI). The S1 motif domain maps to 623–691 (GEIFNGTVVK…NKGKAKLTIK (69 aa)). The disordered stretch occupies residues 693 to 733 (ADKDKSSNNTKPKTHVNNTKDNSEPEQRRDSSKKRAWNEDN). Over residues 699-712 (SNNTKPKTHVNNTK) the composition is skewed to polar residues. A compositionally biased stretch (basic and acidic residues) spans 713–722 (DNSEPEQRRD).

The protein belongs to the polyribonucleotide nucleotidyltransferase family. Mg(2+) is required as a cofactor.

The protein localises to the cytoplasm. The catalysed reaction is RNA(n+1) + phosphate = RNA(n) + a ribonucleoside 5'-diphosphate. Involved in mRNA degradation. Catalyzes the phosphorolysis of single-stranded polyribonucleotides processively in the 3'- to 5'-direction. The polypeptide is Polyribonucleotide nucleotidyltransferase (Rickettsia peacockii (strain Rustic)).